Consider the following 150-residue polypeptide: UPF0178 protein PBPRA1738 (150 aa).

It belongs to the UPF0178 family.

The polypeptide is UPF0178 protein PBPRA1738 (Photobacterium profundum (strain SS9)).